The chain runs to 294 residues: Cuticle collagen 144 (294 aa).

The first 30 residues, 1-30 (MEKILVTISTGAASFAVLAVLFTIPSLYNT), serve as a signal peptide directing secretion. A compositionally biased stretch (pro residues) spans 100–112 (TCPPGPPGPPGQP). 2 disordered regions span residues 100 to 134 (TCPP…TYAP) and 148 to 278 (PQGP…GNDA). Triple-helical region regions lie at residues 102-127 (PPGP…KGED) and 153-274 (GPEG…PGLP). Composition is skewed to low complexity over residues 164-209 (AGPD…PGQD) and 219-265 (APGA…DGQP).

As to quaternary structure, collagen polypeptide chains are complexed within the cuticle by disulfide bonds and other types of covalent cross-links.

Nematode cuticles are composed largely of collagen-like proteins. The cuticle functions both as an exoskeleton and as a barrier to protect the worm from its environment. The chain is Cuticle collagen 144 from Caenorhabditis briggsae.